The chain runs to 289 residues: 4-diphosphocytidyl-2-C-methyl-D-erythritol kinase (289 aa).

Lysine 11 is an active-site residue. ATP is bound at residue 93–103; the sequence is PLAAGLAGGSA. Aspartate 135 is an active-site residue.

This sequence belongs to the GHMP kinase family. IspE subfamily.

It catalyses the reaction 4-CDP-2-C-methyl-D-erythritol + ATP = 4-CDP-2-C-methyl-D-erythritol 2-phosphate + ADP + H(+). The protein operates within isoprenoid biosynthesis; isopentenyl diphosphate biosynthesis via DXP pathway; isopentenyl diphosphate from 1-deoxy-D-xylulose 5-phosphate: step 3/6. In terms of biological role, catalyzes the phosphorylation of the position 2 hydroxy group of 4-diphosphocytidyl-2C-methyl-D-erythritol. The chain is 4-diphosphocytidyl-2-C-methyl-D-erythritol kinase from Thermoanaerobacter sp. (strain X514).